The sequence spans 360 residues: C-C chemokine receptor type 4 (360 aa).

At 1-39 (MNATEVTDTTQDETVYNSYYFYESMPKPCTKEGIKAFGE) the chain is on the extracellular side. N-linked (GlcNAc...) asparagine glycosylation is present at Asn2. The helical transmembrane segment at 40–67 (VFLPPLYSLVFLLGLFGNSVVVLVLFKY) threads the bilayer. Topologically, residues 68-77 (KRLKSMTDVY) are cytoplasmic. The chain crosses the membrane as a helical span at residues 78-98 (LLNLAISDLLFVLSLPFWGYY). At 99–111 (AADQWVFGLGLCK) the chain is on the extracellular side. Cysteines 110 and 187 form a disulfide. The chain crosses the membrane as a helical span at residues 112-133 (IVSWMYLVGFYSGIFFIMLMSI). The Cytoplasmic segment spans residues 134-150 (DRYLAIVHAVFSLKART). The chain crosses the membrane as a helical span at residues 151–175 (LTYGVITSLITWSVAVFASLPGLLF). Residues 176–206 (STCYTEHNHTYCKTQYSVNSTTWKVLSSLEI) are Extracellular-facing. 2 N-linked (GlcNAc...) asparagine glycosylation sites follow: Asn183 and Asn194. The helical transmembrane segment at 207–226 (NVLGLLIPLGIMLFCYSMII) threads the bilayer. Over 227–242 (RTLQHCKNEKKNRAVR) the chain is Cytoplasmic. Residues 243-267 (MIFAVVVLFLGFWTPYNVVLFLETL) form a helical membrane-spanning segment. Residues 268–284 (VELEVLQDCTLERYLDY) lie on the Extracellular side of the membrane. Residues 285–308 (AIQATETLAFIHCCLNPVIYFFLG) form a helical membrane-spanning segment. The Cytoplasmic segment spans residues 309–360 (EKFRKYITQLFRTCRGPLVLCKHCDFLQVYSADMSSSSYTQSTVDHDFRDAL).

The protein belongs to the G-protein coupled receptor 1 family. In terms of processing, in natural killer cells, CCL22 binding induces phosphorylation on yet undefined Ser/Thr residues, most probably by beta-adrenergic receptor kinases 1 and 2. In terms of tissue distribution, expressed in the thymus, macrophages and T- and B-cells.

It is found in the cell membrane. Its function is as follows. High affinity receptor for the C-C type chemokines CCL17/TARC and CCL22/MDC. The activity of this receptor is mediated by G(i) proteins which activate a phosphatidylinositol-calcium second messenger system. Could play a role in lipopolysaccharide (LPS)-induced endotoxic shock. In the CNS, could mediate hippocampal-neuron survival. In Mus musculus (Mouse), this protein is C-C chemokine receptor type 4 (Ccr4).